We begin with the raw amino-acid sequence, 416 residues long: MHFYFNVLNLLTVWVMMAQLQQGVPDEKEKTTALKDLLSRIDLDELMKKDEPPLEFPDTLEGFEYSFNEKGQLRHAKTGEPFVFNYREDLHRWNQKRYEALGEIITKHVYGLLEKECHLKKVTLPVDATENEPKSFIFMSEDALTNPDKLLVLIHGNGVVRAGQWARRLIINEDLDSGTQIPYIKKATEEGYGVIVLNPNENYIEVEKTKAQVQLSSDSSDEPAEKRERKDKIQKETKKRRDFYEKYRNPQKEKETMQMYIRDNGSPEEHAIYVWDHFISQSAAENVFFVAHSYGGLAFVELMIQRETEVKNKVTAVALTDSVHNVWHQEAGKTIREWMRENCCNWVSSSEPLDTSVESMLPDCPRVSAGTERHELTSWKSFPSIFKFFSEAMEAKNSSVKPAPTRRSNRIKYEEL.

Positions Met-1–Gly-23 are cleaved as a signal peptide. Positions Ala-211–Arg-248 are disordered. Residues Pro-223–Glu-236 are compositionally biased toward basic and acidic residues. Ser-293 acts as the Nucleophile in catalysis. Residue Asn-397 is glycosylated (N-linked (GlcNAc...) asparagine).

Belongs to the ARB2A family.

The protein localises to the nucleus. It is found in the cytoplasm. Its function is as follows. May play role in the regulation of alternative splicing. May have hydrolase activity. This chain is Cotranscriptional regulator ARB2A homolog (ARB2A), found in Gallus gallus (Chicken).